The sequence spans 194 residues: Orotate phosphoribosyltransferase (194 aa).

5-phospho-alpha-D-ribose 1-diphosphate-binding positions include Lys-98 and 122–130 (EDVLTTGGS). Orotate is bound by residues Thr-126 and Arg-154.

The protein belongs to the purine/pyrimidine phosphoribosyltransferase family. PyrE subfamily. Homodimer. It depends on Mg(2+) as a cofactor.

It carries out the reaction orotidine 5'-phosphate + diphosphate = orotate + 5-phospho-alpha-D-ribose 1-diphosphate. Its pathway is pyrimidine metabolism; UMP biosynthesis via de novo pathway; UMP from orotate: step 1/2. Functionally, catalyzes the transfer of a ribosyl phosphate group from 5-phosphoribose 1-diphosphate to orotate, leading to the formation of orotidine monophosphate (OMP). The chain is Orotate phosphoribosyltransferase from Deinococcus radiodurans (strain ATCC 13939 / DSM 20539 / JCM 16871 / CCUG 27074 / LMG 4051 / NBRC 15346 / NCIMB 9279 / VKM B-1422 / R1).